The chain runs to 124 residues: Large ribosomal subunit protein uL18 (124 aa).

It belongs to the universal ribosomal protein uL18 family. In terms of assembly, part of the 50S ribosomal subunit; part of the 5S rRNA/L5/L18/L25 subcomplex. Contacts the 5S and 23S rRNAs.

This is one of the proteins that bind and probably mediate the attachment of the 5S RNA into the large ribosomal subunit, where it forms part of the central protuberance. This is Large ribosomal subunit protein uL18 from Aquifex aeolicus (strain VF5).